We begin with the raw amino-acid sequence, 457 residues long: Ribosomal protein uS12 methylthiotransferase RimO (457 aa).

The 111-residue stretch at 30-140 folds into the MTTase N-terminal domain; it reads PTIGMVSLGC…VLDAVHGAVP (111 aa). Residues Cys-39, Cys-75, Cys-104, Cys-171, Cys-175, and Cys-178 each contribute to the [4Fe-4S] cluster site. Residues 157–386 form the Radical SAM core domain; sequence LTPRHFSYLK…MQKAQAISEA (230 aa). The TRAM domain occupies 389 to 456; the sequence is AARIGQRLEV…EYDLWGRAVL (68 aa).

It belongs to the methylthiotransferase family. RimO subfamily. [4Fe-4S] cluster is required as a cofactor.

The protein resides in the cytoplasm. The catalysed reaction is L-aspartate(89)-[ribosomal protein uS12]-hydrogen + (sulfur carrier)-SH + AH2 + 2 S-adenosyl-L-methionine = 3-methylsulfanyl-L-aspartate(89)-[ribosomal protein uS12]-hydrogen + (sulfur carrier)-H + 5'-deoxyadenosine + L-methionine + A + S-adenosyl-L-homocysteine + 2 H(+). Catalyzes the methylthiolation of an aspartic acid residue of ribosomal protein uS12. The polypeptide is Ribosomal protein uS12 methylthiotransferase RimO (Cereibacter sphaeroides (strain ATCC 17025 / ATH 2.4.3) (Rhodobacter sphaeroides)).